Consider the following 289-residue polypeptide: ATP phosphoribosyltransferase (289 aa).

It belongs to the ATP phosphoribosyltransferase family. Long subfamily. Requires Mg(2+) as cofactor.

The protein resides in the cytoplasm. It carries out the reaction 1-(5-phospho-beta-D-ribosyl)-ATP + diphosphate = 5-phospho-alpha-D-ribose 1-diphosphate + ATP. It functions in the pathway amino-acid biosynthesis; L-histidine biosynthesis; L-histidine from 5-phospho-alpha-D-ribose 1-diphosphate: step 1/9. Its activity is regulated as follows. Feedback inhibited by histidine. Functionally, catalyzes the condensation of ATP and 5-phosphoribose 1-diphosphate to form N'-(5'-phosphoribosyl)-ATP (PR-ATP). Has a crucial role in the pathway because the rate of histidine biosynthesis seems to be controlled primarily by regulation of HisG enzymatic activity. The sequence is that of ATP phosphoribosyltransferase from Desulforudis audaxviator (strain MP104C).